The chain runs to 358 residues: Period circadian protein (358 aa).

2 consecutive PAS domains span residues 1–120 (GVVM…QTVP) and 138–240 (FIMR…YIIE).

As to quaternary structure, forms a heterodimer with timeless (TIM); the complex then translocates into the nucleus. Phosphorylated with a circadian rhythmicity.

The protein resides in the nucleus. In terms of biological role, involved in the generation of biological rhythms. The biological cycle depends on the rhythmic formation and nuclear localization of the tim-per complex. Light induces the degradation of tim, which promotes elimination of per. Nuclear activity of the heterodimer coordinatively regulates per and tim transcription negative feedback loop. Behaves as a negative element in circadian transcriptional loop. Does not appear to bind DNA, suggesting indirect transcriptional inhibition. This chain is Period circadian protein (per), found in Hyalophora cecropia (Cecropia moth).